Reading from the N-terminus, the 444-residue chain is Probable kynurenine--oxoglutarate transaminase BNA3 (444 aa).

Lysine 271 carries the N6-(pyridoxal phosphate)lysine modification.

The protein belongs to the class-I pyridoxal-phosphate-dependent aminotransferase family. Homodimer. It depends on pyridoxal 5'-phosphate as a cofactor.

The protein localises to the cytoplasm. It is found in the mitochondrion. It catalyses the reaction L-kynurenine + 2-oxoglutarate = kynurenate + L-glutamate + H2O. It functions in the pathway amino-acid degradation; L-kynurenine degradation; kynurenate from L-kynurenine: step 1/2. Catalyzes the irreversible transamination of the L-tryptophan metabolite L-kynurenine to form kynurenic acid (KA). This is Probable kynurenine--oxoglutarate transaminase BNA3 (BNA3) from Saccharomyces cerevisiae (strain ATCC 204508 / S288c) (Baker's yeast).